Here is a 472-residue protein sequence, read N- to C-terminus: Ulvan lyase (472 aa).

A signal peptide spans 1 to 21 (MIIKQYLLKISLCVLLLGCDS). N46 and N109 together coordinate substrate. Catalysis depends on H110, which acts as the Proton donor. The substrate site is built by K112 and H130. Y175 acts as the Proton acceptor in catalysis. Positions 191, 195, and 233 each coordinate substrate. H195 is a binding site for Zn(2+). Zn(2+) is bound by residues H251, C253, and H265. H265 contributes to the substrate binding site.

This sequence belongs to the polysaccharide lyase 25 family.

In terms of biological role, ulvan lyase involved in ulvan degradation. Ulvan is the main polysaccharide component of the Ulvales (green seaweed) cell wall. It is composed of disaccharide building blocks comprising 3-sulfated rhamnose (Rha3S) linked to D-glucuronic acid (GlcA), L-iduronic acid (IduA), or D-xylose (Xyl). Ulvan lyase catalyzes the endolytic cleavage of the glycosidic bond between Rha3S and the uronic acids GlcA or IduA, producing oligosaccharides that have unsaturated 4-deoxy-L-threo-hex-4-enopyranosiduronic acid (deltaUA) at the non-reducing end. This results eventually in the degradation of the ulvan polysaccharide into deltaUA-Rha3S disaccharides and deltaUA-Rha3S-Xyl-Rha3S tetrasaccharides. In Nonlabens ulvanivorans (Persicivirga ulvanivorans), this protein is Ulvan lyase.